Reading from the N-terminus, the 108-residue chain is Parvalbumin alpha (108 aa).

The residue at position 1 (Ala1) is an N-acetylalanine. EF-hand domains are found at residues 37–72 (MSANDVKKVFKAIDADASGFIEEEELKFVLKSFAAD) and 76–108 (LTDAETKAFLKAADKDGDGKIGIDEFETLVHEA). 11 residues coordinate Ca(2+): Asp50, Asp52, Ser54, Phe56, Glu58, Glu61, Asp89, Asp91, Asp93, Lys95, and Glu100.

This sequence belongs to the parvalbumin family.

Its function is as follows. In muscle, parvalbumin is thought to be involved in relaxation after contraction. It binds two calcium ions. The chain is Parvalbumin alpha from Esox lucius (Northern pike).